The chain runs to 439 residues: tRNA(Ile)-lysidine synthase (439 aa).

Residue 23 to 28 (SGGLDS) participates in ATP binding.

This sequence belongs to the tRNA(Ile)-lysidine synthase family.

It localises to the cytoplasm. The catalysed reaction is cytidine(34) in tRNA(Ile2) + L-lysine + ATP = lysidine(34) in tRNA(Ile2) + AMP + diphosphate + H(+). Its function is as follows. Ligates lysine onto the cytidine present at position 34 of the AUA codon-specific tRNA(Ile) that contains the anticodon CAU, in an ATP-dependent manner. Cytidine is converted to lysidine, thus changing the amino acid specificity of the tRNA from methionine to isoleucine. This chain is tRNA(Ile)-lysidine synthase, found in Methylococcus capsulatus (strain ATCC 33009 / NCIMB 11132 / Bath).